Here is a 151-residue protein sequence, read N- to C-terminus: Protein SprT-like (151 aa).

Positions 7–146 constitute a SprT-like domain; sequence QSLTESIAIK…CGRCGGILKL (140 aa). Zn(2+) is bound at residue H67. The active site involves E68. H71 lines the Zn(2+) pocket.

The protein belongs to the SprT family. The cofactor is Zn(2+).

Its subcellular location is the cytoplasm. The polypeptide is Protein SprT-like (Staphylococcus epidermidis (strain ATCC 35984 / DSM 28319 / BCRC 17069 / CCUG 31568 / BM 3577 / RP62A)).